The primary structure comprises 211 residues: Peptidyl-tRNA hydrolase (211 aa).

TRNA is bound at residue Tyr-15. His-20 serves as the catalytic Proton acceptor. Residues Phe-66, Asn-68, and Asn-114 each contribute to the tRNA site. The segment at 189–211 (TKPPRPKATRPAQAQAAPQAGAD) is disordered. The span at 197-211 (TRPAQAQAAPQAGAD) shows a compositional bias: low complexity.

The protein belongs to the PTH family. As to quaternary structure, monomer.

The protein localises to the cytoplasm. It carries out the reaction an N-acyl-L-alpha-aminoacyl-tRNA + H2O = an N-acyl-L-amino acid + a tRNA + H(+). Functionally, hydrolyzes ribosome-free peptidyl-tRNAs (with 1 or more amino acids incorporated), which drop off the ribosome during protein synthesis, or as a result of ribosome stalling. Its function is as follows. Catalyzes the release of premature peptidyl moieties from peptidyl-tRNA molecules trapped in stalled 50S ribosomal subunits, and thus maintains levels of free tRNAs and 50S ribosomes. This Acidovorax ebreus (strain TPSY) (Diaphorobacter sp. (strain TPSY)) protein is Peptidyl-tRNA hydrolase.